Reading from the N-terminus, the 744-residue chain is Sorting nexin MVP1 (744 aa).

3 disordered regions span residues Met1–Thr40, Asn218–Gly252, and Ser273–Thr299. Composition is skewed to polar residues over residues Thr26–Thr40 and Asn218–Ile243. A compositionally biased stretch (gly residues) spans Gln283–Ser297. Residues Gly326–Thr444 form the PX domain. A 1,2-diacyl-sn-glycero-3-phospho-(1D-myo-inositol-3-phosphate) is bound by residues Arg369, Ser371, Lys395, and Arg410.

It belongs to the sorting nexin family.

It localises to the cytoplasm. The protein localises to the membrane. Required for vacuolar protein sorting. The polypeptide is Sorting nexin MVP1 (MVP1) (Candida albicans (strain SC5314 / ATCC MYA-2876) (Yeast)).